The sequence spans 429 residues: Serine hydroxymethyltransferase (429 aa).

(6S)-5,6,7,8-tetrahydrofolate-binding positions include Leu-126 and 130-132 (GHL). The residue at position 235 (Lys-235) is an N6-(pyridoxal phosphate)lysine.

Belongs to the SHMT family. As to quaternary structure, homodimer. The cofactor is pyridoxal 5'-phosphate.

It localises to the cytoplasm. The enzyme catalyses (6R)-5,10-methylene-5,6,7,8-tetrahydrofolate + glycine + H2O = (6S)-5,6,7,8-tetrahydrofolate + L-serine. Its pathway is one-carbon metabolism; tetrahydrofolate interconversion. It functions in the pathway amino-acid biosynthesis; glycine biosynthesis; glycine from L-serine: step 1/1. Catalyzes the reversible interconversion of serine and glycine with tetrahydrofolate (THF) serving as the one-carbon carrier. This reaction serves as the major source of one-carbon groups required for the biosynthesis of purines, thymidylate, methionine, and other important biomolecules. Also exhibits THF-independent aldolase activity toward beta-hydroxyamino acids, producing glycine and aldehydes, via a retro-aldol mechanism. This Zymomonas mobilis subsp. mobilis (strain ATCC 31821 / ZM4 / CP4) protein is Serine hydroxymethyltransferase.